The sequence spans 576 residues: Arginine--tRNA ligase (576 aa).

The 'HIGH' region motif lies at 126–136 (ANPTGPMHIGH).

Belongs to the class-I aminoacyl-tRNA synthetase family. As to quaternary structure, monomer.

The protein resides in the cytoplasm. It carries out the reaction tRNA(Arg) + L-arginine + ATP = L-arginyl-tRNA(Arg) + AMP + diphosphate. The polypeptide is Arginine--tRNA ligase (Rickettsia felis (strain ATCC VR-1525 / URRWXCal2) (Rickettsia azadi)).